Consider the following 99-residue polypeptide: DNA-directed RNA polymerase subunit omega (99 aa).

Residues 1-10 are compositionally biased toward low complexity; that stretch reads MSSTSAASAA. Positions 1–20 are disordered; the sequence is MSSTSAASAAGQGALPAYDT.

This sequence belongs to the RNA polymerase subunit omega family. In terms of assembly, the RNAP catalytic core consists of 2 alpha, 1 beta, 1 beta' and 1 omega subunit. When a sigma factor is associated with the core the holoenzyme is formed, which can initiate transcription.

The enzyme catalyses RNA(n) + a ribonucleoside 5'-triphosphate = RNA(n+1) + diphosphate. In terms of biological role, promotes RNA polymerase assembly. Latches the N- and C-terminal regions of the beta' subunit thereby facilitating its interaction with the beta and alpha subunits. The polypeptide is DNA-directed RNA polymerase subunit omega (Rhodococcus erythropolis (strain PR4 / NBRC 100887)).